Consider the following 47-residue polypeptide: Delta-actitoxin-Axm1e (47 aa).

Cystine bridges form between Cys-4–Cys-44, Cys-6–Cys-34, and Cys-27–Cys-45.

Belongs to the sea anemone sodium channel inhibitory toxin family. Type I subfamily.

It localises to the secreted. The protein resides in the nematocyst. Its function is as follows. Binds specifically to voltage-gated sodium channels (Nav), thereby delaying their inactivation. This toxin is active on a variety of voltage-gated sodium channels (Nav1.1/SCN1A, Nav1.2/SCN2A, Nav1.3/SCN3A, Nav1.4/SCN4A, Nav1.5/SCN5A and Nav1.6/SCN8A). This is Delta-actitoxin-Axm1e from Anthopleura xanthogrammica (Giant green sea anemone).